Here is a 687-residue protein sequence, read N- to C-terminus: Putative pentatricopeptide repeat-containing protein At3g15930 (687 aa).

PPR repeat units follow at residues Asp98–Pro132, Asp133–Ser168, Asn169–Glu199, Asp200–Pro234, Thr235–Pro269, Ser270–Ser304, Trp305–Arg331, Asp332–Pro366, Asp367–Asn401, Asp402–Arg432, Asp433–Pro467, Asp468–Asp498, and Ser504–Asn534. The tract at residues Val539–Asn614 is type E motif. The type E(+) motif stretch occupies residues Gly615 to Thr645.

This sequence belongs to the PPR family. PCMP-E subfamily.

The protein is Putative pentatricopeptide repeat-containing protein At3g15930 (PCMP-E51) of Arabidopsis thaliana (Mouse-ear cress).